Reading from the N-terminus, the 345-residue chain is Cuticle collagen 14 (345 aa).

Triple-helical region regions lie at residues 156-185 (GPPG…PGPP), 207-263 (GDGG…PGTY), and 268-333 (GPAG…PGSC). The interval 161–345 (AGDGGRDGAD…CPPARLAPGY (185 aa)) is disordered. Pro residues-rich tracts occupy residues 179 to 191 (IGPP…PGPD), 198 to 223 (PQCP…PPGA), and 278 to 290 (RPGP…PAGP). The segment covering 292–304 (GENGKGGGQGPSG) has biased composition (gly residues).

It belongs to the cuticular collagen family. In terms of assembly, collagen polypeptide chains are complexed within the cuticle by disulfide bonds and other types of covalent cross-links.

Nematode cuticles are composed largely of collagen-like proteins. The cuticle functions both as an exoskeleton and as a barrier to protect the worm from its environment. This Caenorhabditis elegans protein is Cuticle collagen 14 (col-14).